Reading from the N-terminus, the 1666-residue chain is Complement C3 (1666 aa).

A signal peptide spans 1-22 (MGPAAGPSLLLLLLASVSLALG). Residues Ser70, Ser296, and Ser302 each carry the phosphoserine modification. 13 cysteine pairs are disulfide-bonded: Cys557-Cys821, Cys630-Cys666, Cys698-Cys725, Cys699-Cys732, Cys712-Cys733, Cys878-Cys1517, Cys1106-Cys1163, Cys1363-Cys1493, Cys1394-Cys1462, Cys1510-Cys1515, Cys1522-Cys1593, Cys1540-Cys1664, and Cys1640-Cys1649. Ser676 bears the Phosphoserine mark. Positions 698–733 (CCEDGMRENPMQFSCQRRARYVSLGEACVKAFLDCC) constitute an Anaphylatoxin-like domain. An N-linked (GlcNAc...) asparagine glycan is attached at Asn944. Ser973 is modified (phosphoserine). The isoglutamyl cysteine thioester (Cys-Gln) cross-link spans 1015-1018 (CGEQ). Residue Ser1326 is modified to Phosphoserine. In terms of domain architecture, NTR spans 1522–1664 (CFIQLPEKIT…FTENMVVFGC (143 aa)). At Ser1576 the chain carries Phosphoserine. N-linked (GlcNAc...) asparagine glycosylation is present at Asn1620. Positions 1637-1662 (AEECQDEENQQQCQDLGTFTENMVVF) are interaction with CFP/properdin.

In terms of assembly, in absence of complement activation, the C3 precursor is first processed by the removal of 4 Arg residues, forming two chains, beta and alpha, linked by a disulfide bond. Complement C3b is composed of complement C3b and complement C3 beta chains that are associated via disulfide bonds. Non-enzymatic component of the C5 convertase, also named C4bC2bC3b, composed of the serine protease complement C2b (C2), complement C3b, as well as complement C4b (C4). Non-enzymatic component of the C5 convertase of the alternative complement pathways composed of the serine protease complement CFB and complement C3b. Interacts with CFP; interaction takes place together with CFB in the alternative complement system and allows the complex to become active. Interacts with CR1 (via Sushi 8 and Sushi 9 domains). Interacts with CFH. As to quaternary structure, interacts with CFH. Interacts with CR2. In terms of assembly, during pregnancy, C3dg exists as a complex (probably a 2:2:2 heterohexamer) with AGT and the proform of PRG2. Interacts with CR2 (via the N-terminal Sushi domains 1 and 2). In terms of processing, C3 precursor is first processed by the removal of 4 Arg residues, forming two chains, beta and alpha, linked by a disulfide bond. During activation of the complement systems, the alpha chain is cleaved into C3a and C3b by the C3 convertase: C3b stays linked to the beta chain, while C3a is released in the plasma. The alpha chain is cleaved by the serine protease complement C2b component of the C3 convertase to generate C3a and C3b following activation by the classical, lectin and GZMK complement systems. The alpha chain is cleaved by CFB component of the C3 convertase to generate C3a and C3b following activation by the alternative complement system. C3a is further processed by carboxypeptidases to release the C-terminal arginine residue generating the acylation stimulating protein (ASP). Levels of ASP are increased in adipocytes in the postprandial period and by insulin and dietary chylomicrons. Post-translationally, complement C3b is rapidly split in two positions by factor I (CFI) and a cofactor (CFH) to form iC3b (inactivated C3b) and C3f which is released. CFI and CFH catalyze proteolytic degradation of already-deposited complement C3b. Then iC3b is slowly cleaved (possibly by CFI) to form C3c (beta chain + alpha' chain fragment 1 + alpha' chain fragment 2), C3dg and C3f. Other proteases produce other fragments such as C3d or C3g. In terms of processing, upon activation, the internal thioester bond reacts with carbohydrate antigens on the target surface to form amide or ester bonds, leading to covalent association with the surface of pathogens. Complement C3b interacts with complement C4b via a thioester linkage. Post-translationally, phosphorylated by FAM20C in the extracellular medium.

The protein localises to the secreted. Its subcellular location is the cell surface. Complement activation is inhibited by VSIG4. Its function is as follows. Precursor of non-enzymatic components of the classical, alternative, lectin and GZMK complement pathways, which consist in a cascade of proteins that leads to phagocytosis and breakdown of pathogens and signaling that strengthens the adaptive immune system. Non-enzymatic component of C5 convertase. Generated following cleavage by C3 convertase, it covalently attaches to the surface of pathogens, where it acts as an opsonin that marks the surface of antigens for removal. Complement C3b binds covalently via its reactive thioester, to cell surface carbohydrates or immune aggregates. Together with complement C4b, it then recruits the serine protease complement C2b to form the C5 convertase, which cleaves and activate C5, the next component of the complement pathways. In the alternative complement pathway, recruits the serine protease CFB to form the C5 convertase that cleaves and activates C5. In terms of biological role, mediator of local inflammatory process released following cleavage by C3 convertase. Acts by binding to its receptor, C3AR1, activating G protein-coupled receptor signaling, promoting the phosphorylation, ARRB2-mediated internalization and endocytosis of C3AR1. C3a anaphylatoxin stimulates the activation of immune cells such as mast cells and basophilic leukocytes to release inflammation agents, such as cytokines, chemokines and histamine, which promote inflammation development. Also acts as potent chemoattractant for the migration of macrophages and neutrophils to the inflamed tissues, resulting in neutralization of the inflammatory triggers by multiple ways, such as phagocytosis and generation of reactive oxidants. Functionally, adipogenic hormone that stimulates triglyceride synthesis and glucose transport in adipocytes, regulating fat storage and playing a role in postprandial triglyceride clearance. Appears to stimulate triglyceride synthesis via activation of the PLC, MAPK and AKT signaling pathways. Acts by binding to its receptor, C5AR2, activating G protein-coupled receptor signaling, promoting the phosphorylation, ARRB2-mediated internalization and endocytosis of C5AR2. Its function is as follows. Acts as a chemoattractant for neutrophils in chronic inflammation. This Cavia porcellus (Guinea pig) protein is Complement C3.